The following is a 159-amino-acid chain: Large ribosomal subunit protein uL22 (159 aa).

It belongs to the universal ribosomal protein uL22 family. In terms of assembly, part of the 50S ribosomal subunit.

Its function is as follows. This protein binds specifically to 23S rRNA. It makes multiple contacts with different domains of the 23S rRNA in the assembled 50S subunit and ribosome. In terms of biological role, the globular domain of the protein is located near the polypeptide exit tunnel on the outside of the subunit, while an extended beta-hairpin is found that lines the wall of the exit tunnel in the center of the 70S ribosome. This is Large ribosomal subunit protein uL22 from Ignicoccus hospitalis (strain KIN4/I / DSM 18386 / JCM 14125).